We begin with the raw amino-acid sequence, 503 residues long: Probable cytosol aminopeptidase (503 aa).

Mn(2+) is bound by residues lysine 270 and aspartate 275. Lysine 282 is a catalytic residue. Positions 293, 352, and 354 each coordinate Mn(2+). Residue arginine 356 is part of the active site.

This sequence belongs to the peptidase M17 family. Mn(2+) serves as cofactor.

The protein resides in the cytoplasm. The enzyme catalyses Release of an N-terminal amino acid, Xaa-|-Yaa-, in which Xaa is preferably Leu, but may be other amino acids including Pro although not Arg or Lys, and Yaa may be Pro. Amino acid amides and methyl esters are also readily hydrolyzed, but rates on arylamides are exceedingly low.. The catalysed reaction is Release of an N-terminal amino acid, preferentially leucine, but not glutamic or aspartic acids.. Presumably involved in the processing and regular turnover of intracellular proteins. Catalyzes the removal of unsubstituted N-terminal amino acids from various peptides. The protein is Probable cytosol aminopeptidase of Shigella boydii serotype 18 (strain CDC 3083-94 / BS512).